A 490-amino-acid chain; its full sequence is Probable cytosol aminopeptidase (490 aa).

Mn(2+) contacts are provided by Lys-256 and Asp-261. Residue Lys-268 is part of the active site. Mn(2+)-binding residues include Asp-280, Asp-340, and Glu-342. Arg-344 is a catalytic residue.

The protein belongs to the peptidase M17 family. Mn(2+) serves as cofactor.

It is found in the cytoplasm. The catalysed reaction is Release of an N-terminal amino acid, Xaa-|-Yaa-, in which Xaa is preferably Leu, but may be other amino acids including Pro although not Arg or Lys, and Yaa may be Pro. Amino acid amides and methyl esters are also readily hydrolyzed, but rates on arylamides are exceedingly low.. It carries out the reaction Release of an N-terminal amino acid, preferentially leucine, but not glutamic or aspartic acids.. Its function is as follows. Presumably involved in the processing and regular turnover of intracellular proteins. Catalyzes the removal of unsubstituted N-terminal amino acids from various peptides. The sequence is that of Probable cytosol aminopeptidase from Synechococcus sp. (strain CC9902).